The sequence spans 262 residues: Acyl-[acyl-carrier-protein]--UDP-N-acetylglucosamine O-acyltransferase (262 aa).

The protein belongs to the transferase hexapeptide repeat family. LpxA subfamily. In terms of assembly, homotrimer.

It is found in the cytoplasm. It carries out the reaction a (3R)-hydroxyacyl-[ACP] + UDP-N-acetyl-alpha-D-glucosamine = a UDP-3-O-[(3R)-3-hydroxyacyl]-N-acetyl-alpha-D-glucosamine + holo-[ACP]. It participates in glycolipid biosynthesis; lipid IV(A) biosynthesis; lipid IV(A) from (3R)-3-hydroxytetradecanoyl-[acyl-carrier-protein] and UDP-N-acetyl-alpha-D-glucosamine: step 1/6. Its function is as follows. Involved in the biosynthesis of lipid A, a phosphorylated glycolipid that anchors the lipopolysaccharide to the outer membrane of the cell. The sequence is that of Acyl-[acyl-carrier-protein]--UDP-N-acetylglucosamine O-acyltransferase from Histophilus somni (strain 129Pt) (Haemophilus somnus).